We begin with the raw amino-acid sequence, 1026 residues long: Vacuolar protein sorting-associated protein 18 homolog (1026 aa).

A coiled-coil region spans residues 858–896 (IVDFLKRNKQRLEKLERSMKEATEIASEIRDKQEKLKNR). An RING-type; degenerate zinc finger spans residues 906-932 (CSHCARPISGRAFNVHSCRHFFHRECL).

Probable core component of at least two putative endosomal tethering complexes, the homotypic fusion and vacuole protein sorting (HOPS) complex and the class C core vacuole/endosome tethering (CORVET) complex. Their common core is composed of the class C Vps proteins vps-11, vps-16 and vps-18, which in HOPS further associates with vps-33.1, vps-39 and vps-41 and in CORVET with vps-8 and vps-33.2. As to expression, in hermaphrodites, expressed in coelomocytes and gonadal sheath cells.

It is found in the cytoplasm. The protein localises to the late endosome membrane. The protein resides in the lysosome membrane. It localises to the early endosome. Its subcellular location is the cytoplasmic vesicle. It is found in the autophagosome. The protein localises to the clathrin-coated vesicle. Its function is as follows. Plays a role in vesicle-mediated protein trafficking to lysosomal compartments including the endocytic membrane transport and autophagic pathways. Believed to act as a core component of the putative HOPS and CORVET endosomal tethering complexes which are proposed to be involved in the rab-5-to-rab-7 endosome conversion probably implicating sand-1, and via binding SNAREs and SNARE complexes to mediate tethering and docking events during SNARE-mediated membrane fusion. The HOPS complex is proposed to be recruited to rab-7 on the late endosomal membrane and to regulate late endocytic, phagocytic and autophagic traffic towards lysosomes. Within the HOPS complex, contributes to the normal development of gut granules in intestinal cells of the embryo, and also promotes the trafficking of embryonic intestinal gut granules away from lysosomes. The CORVET complex is proposed to function as a rab-5 effector to mediate early endosome fusion probably in specific endosome subpopulations. Required for fusion of endosomes and autophagosomes with lysosomes. Plays a role in the degradation of apoptotic cells during programmed cell death. The polypeptide is Vacuolar protein sorting-associated protein 18 homolog (Caenorhabditis elegans).